We begin with the raw amino-acid sequence, 355 residues long: Protein RecA (355 aa).

ATP is bound at residue Gly-67 to Thr-74. The interval Asn-336–Phe-355 is disordered. The span at Asp-341–Phe-355 shows a compositional bias: acidic residues.

The protein belongs to the RecA family.

The protein localises to the cytoplasm. Functionally, can catalyze the hydrolysis of ATP in the presence of single-stranded DNA, the ATP-dependent uptake of single-stranded DNA by duplex DNA, and the ATP-dependent hybridization of homologous single-stranded DNAs. It interacts with LexA causing its activation and leading to its autocatalytic cleavage. The polypeptide is Protein RecA (Photorhabdus laumondii subsp. laumondii (strain DSM 15139 / CIP 105565 / TT01) (Photorhabdus luminescens subsp. laumondii)).